The primary structure comprises 2155 residues: Alpha-tectorin (2155 aa).

The signal sequence occupies residues 1 to 24 (MNYSSLLRIWVSFIFALVRHQAQP). N-linked (GlcNAc...) asparagine glycosylation is found at N34, N187, N215, N278, N455, N506, N528, and N560. Positions 98–252 (PFWADVHNGI…GRWAFKVDGK (155 aa)) constitute an NIDO domain. A VWFC domain is found at 260–314 (CTSRGQFLRRGEVFWDDLNCTIKCRCLDFNNEIYCQEASCSPYEVCEPKGRFFYC). A VWFD 1 domain is found at 320 to 500 (STCVVFGEPH…RVYHADWKCG (181 aa)). 2 disulfide bridges follow: C322–C461 and C344–C499. The 54-residue stretch at 597–650 (CPSFSHYSVCTSSCPDTCSDLTASQNCATPCTEGCECNEGFVLSTSQCVPLHKC) folds into the TIL 1 domain. N670, N687, N813, N843, N855, N898, N920, N931, and N949 each carry an N-linked (GlcNAc...) asparagine glycan. Residues 711–886 (TVCLLSQNQV…SWTTFEEICN (176 aa)) enclose the VWFD 2 domain. C713 and C849 form a disulfide bridge. The 53-residue stretch at 984–1036 (CPENSHFEECMTCTETCETLALGPICVDSCSEGCQCDEGYALQGSQCVPRSEC) folds into the TIL 2 domain. Residues N1048, N1064, N1235, and N1364 are each glycosylated (N-linked (GlcNAc...) asparagine). Positions 1098-1278 (ASCIVSGYGH…SWVKRDTFCQ (181 aa)) constitute a VWFD 3 domain. 2 disulfide bridges follow: C1100/C1241 and C1122/C1277. Residues 1372 to 1425 (CPPNSHYESCVSVCQPRCAAIRLKSDCNHYCVEGCQCDAGYVLNGKSCILPHNC) enclose the TIL 3 domain. Residues 1485–1666 (SYCLAAGGGV…QKRPLAPSCN (182 aa)) form the VWFD 4 domain. 7 disulfide bridges follow: C1487–C1622, C1509–C1665, C1717–C1775, C1741–C1784, C1786–C1818, C1806–C1898, and C1837–C1857. 10 N-linked (GlcNAc...) asparagine glycosylation sites follow: N1538, N1565, N1756, N1772, N1794, N1851, N1864, N1880, N1920, and N1939. The ZP domain occupies 1805–2059 (TCKAAQMEVS…YSCKINCPQN (255 aa)). 3 cysteine pairs are disulfide-bonded: C1980-C2040, C2001-C2056, and C2045-C2052. A lipid anchor (GPI-anchor amidated asparagine) is attached at N2091. The propeptide at 2092-2155 (GGCEQICTSR…HLIYKSGATS (64 aa)) is removed in mature form.

In terms of assembly, may form homomeric filament after self-association or heteromeric filament after association with beta-tectorin. Interacts with CEACAM16. 3 products of tectorin seem to exist: HMM, MMM and LMM. They may be generated by active processing or the result of proteolysis occurring between intrachain disulfide bonds. In terms of processing, the presence of a hydrophobic C-terminus preceded by a potential cleavage site strongly suggests that tectorins are synthesized as glycosylphosphatidylinositol-linked, membrane-bound precursors. Tectorins are targeted to the apical surface of the inner ear epithelia by the lipid and proteolytically released into the extracellular compartment. In terms of tissue distribution, cochlea-specific.

The protein resides in the cell membrane. Its subcellular location is the secreted. The protein localises to the extracellular space. It is found in the extracellular matrix. Functionally, one of the major non-collagenous components of the tectorial membrane. The tectorial membrane is an extracellular matrix of the inner ear that covers the neuroepithelium of the cochlea and contacts the stereocilia bundles of specialized sensory hair cells. Sound induces movement of these hair cells relative to the tectorial membrane, deflects the stereocilia and leads to fluctuations in hair-cell membrane potential, transducing sound into electrical signals. This chain is Alpha-tectorin (Tecta), found in Mus musculus (Mouse).